The primary structure comprises 427 residues: Putative B3 domain-containing protein Os04g0346900 (427 aa).

DNA-binding regions (TF-B3) lie at residues 25–118 (LVPS…FDTT) and 140–236 (KPQF…FGPN). A disordered region spans residues 253–309 (TGEQQEAPSFSRRKCNNKKKSRFGEDDGNQQEMPCSRKGSGNKGRTSDRETKRMRKT). Over residues 263-273 (SRRKCNNKKKS) the composition is skewed to basic residues. Residues 320 to 427 (WIKKEINEYV…TLWRVDIERC (108 aa)) constitute a DNA-binding region (TF-B3 3).

Its subcellular location is the nucleus. The protein is Putative B3 domain-containing protein Os04g0346900 of Oryza sativa subsp. japonica (Rice).